Consider the following 288-residue polypeptide: Protein FANTASTIC FOUR 3 (288 aa).

Positions 48-60 are enriched in basic and acidic residues; that stretch reads HAEDTRNRNDDKA. 3 disordered regions span residues 48–100, 146–172, and 222–261; these read HAED…YYVQ, ETTT…PLTT, and NEFV…IENV. Low complexity predominate over residues 66–90; the sequence is SDSSGWSSLQSLSSGSSSSTKTTTS. The FAF domain maps to 165–217; the sequence is DLPPPLTTMRGFQCIQMRPHRENGRLVMTATNAPPRNGCFQADRSNGRLRLSI. The segment covering 223-256 has biased composition (acidic residues); it reads EFVENEEETIEPEETEEYEEEEEEEEDEDEDEVM.

Belongs to the fantastic four family. As to expression, expressed in the shoot apex, stamens, young leaves and young siliques, but not in old leaves. Detected in provascular and vascular tissue, but not in the vegetative meristem. In inflorescences, restricted to the vasculature and absent from young flowers, except from anthers.

In terms of biological role, able to repress WUS when constitutively overexpressed, but have no effect on CLV3. The sequence is that of Protein FANTASTIC FOUR 3 (FAF3) from Arabidopsis thaliana (Mouse-ear cress).